A 334-amino-acid polypeptide reads, in one-letter code: Leukocyte cell-derived chemotaxin 1 (334 aa).

Residues Val-45 to Trp-65 form a helical membrane-spanning segment. Positions Gly-104 to Leu-201 constitute a BRICHOS domain. Residues Cys-131 and Cys-193 are joined by a disulfide bond. The propeptide occupies Arg-211–Arg-214. Residues Arg-218–Glu-268 are disordered. Polar residues predominate over residues Asn-242–Asn-257. An N-linked (GlcNAc...) asparagine glycan is attached at Asn-243. 4 cysteine pairs are disulfide-bonded: Cys-282–Cys-286, Cys-283–Cys-323, Cys-293–Cys-317, and Cys-297–Cys-313.

This sequence belongs to the chondromodulin-1 family. In terms of processing, after cleavage, the post-translationally modified ChM-I is secreted as a glycoprotein. In terms of tissue distribution, detected in cartilage and cardiac valves (at protein level). Detected in the laminae fibrosa, spongiosa and ventricularis layers of normal cardiac valves (at protein level). Expression is decreased cardiac valves of patients with valvular heart disease (at protein level). Weakly expressed in chondrosarcoma.

The protein localises to the secreted. It localises to the extracellular space. The protein resides in the extracellular matrix. It is found in the endomembrane system. Functionally, bifunctional growth regulator that stimulates the growth of cultured chondrocytes in the presence of basic fibroblast growth factor (FGF) but inhibits the growth of cultured vascular endothelial cells. May contribute to the rapid growth of cartilage and vascular invasion prior to the replacement of cartilage by bone during endochondral bone development. Inhibits in vitro tube formation and mobilization of endothelial cells. Plays a role as antiangiogenic factor in cardiac valves to suppress neovascularization. This is Leukocyte cell-derived chemotaxin 1 from Homo sapiens (Human).